Reading from the N-terminus, the 332-residue chain is Cilia- and flagella-associated protein 119 (332 aa).

The segment covering methionine 1–leucine 10 has biased composition (polar residues). Disordered stretches follow at residues methionine 1–phenylalanine 70, glutamate 246–glutamine 271, and arginine 308–lysine 332. A compositionally biased stretch (basic and acidic residues) spans valine 14 to arginine 30. The span at glutamate 49 to proline 58 shows a compositional bias: polar residues. Residues leucine 287 to arginine 308 are a coiled coil.

In terms of tissue distribution, specifically expressed in testis (at protein level).

The protein resides in the cell projection. The protein localises to the cilium. It localises to the flagellum. It is found in the cytoplasmic vesicle. Its subcellular location is the secretory vesicle. The protein resides in the acrosome. The protein localises to the cytoplasm. This Rattus norvegicus (Rat) protein is Cilia- and flagella-associated protein 119.